Reading from the N-terminus, the 471-residue chain is Probable flavin-containing monoamine oxidase B (471 aa).

Residue Cys406 is modified to S-8alpha-FAD cysteine.

This sequence belongs to the flavin monoamine oxidase family. It depends on FAD as a cofactor.

The catalysed reaction is a secondary aliphatic amine + O2 + H2O = a primary amine + an aldehyde + H2O2. In Dictyostelium discoideum (Social amoeba), this protein is Probable flavin-containing monoamine oxidase B (maoB-1).